The chain runs to 202 residues: Glycerol-3-phosphate acyltransferase (202 aa).

4 helical membrane passes run 11–31, 87–107, 116–136, and 158–178; these read ALIA…GLIL, PALA…WLGF, FIGV…AIWL, and VILW…LAAL.

This sequence belongs to the PlsY family. In terms of assembly, probably interacts with PlsX.

Its subcellular location is the cell inner membrane. It carries out the reaction an acyl phosphate + sn-glycerol 3-phosphate = a 1-acyl-sn-glycero-3-phosphate + phosphate. It functions in the pathway lipid metabolism; phospholipid metabolism. In terms of biological role, catalyzes the transfer of an acyl group from acyl-phosphate (acyl-PO(4)) to glycerol-3-phosphate (G3P) to form lysophosphatidic acid (LPA). This enzyme utilizes acyl-phosphate as fatty acyl donor, but not acyl-CoA or acyl-ACP. This chain is Glycerol-3-phosphate acyltransferase, found in Methylorubrum populi (strain ATCC BAA-705 / NCIMB 13946 / BJ001) (Methylobacterium populi).